Here is a 281-residue protein sequence, read N- to C-terminus: E2F-associated phosphoprotein (281 aa).

Methionine 1 bears the N-acetylmethionine mark. A disordered region spans residues 1-27 (MNRLQDDYDPYAVEEPSDEEPALSSSE). Acidic residues predominate over residues 15–27 (EPSDEEPALSSSE). Serine 17 is subject to Phosphoserine. Threonine 37 bears the Phosphothreonine mark. A phosphoserine mark is found at serine 109 and serine 111. Residues 222–245 (PENRRKRRSAKKMRSNPEDPAERE) form a disordered region. The segment covering 225–235 (RRKRRSAKKMR) has biased composition (basic residues). The span at 236–245 (SNPEDPAERE) shows a compositional bias: basic and acidic residues.

In terms of assembly, interacts with E2F1. The C-terminal half binds the N-terminal of E2F1. Also interacts with E2F2 and E2F3, but not E2F4.

It localises to the cytoplasm. The protein resides in the nucleus. May play an important role in the fine-tuning of both major E2F1 activities, the regulation of the cell-cycle and the induction of apoptosis. Promotes S-phase entry, and inhibits p14(ARP) expression. This is E2F-associated phosphoprotein (Eapp) from Mus musculus (Mouse).